We begin with the raw amino-acid sequence, 929 residues long: Isoleucine--tRNA ligase (929 aa).

The short motif at 58-68 (PYANGDIHIGH) is the 'HIGH' region element. Residue glutamate 563 coordinates L-isoleucyl-5'-AMP. The short motif at 605-609 (KMSKS) is the 'KMSKS' region element. Lysine 608 is a binding site for ATP. Residues cysteine 892, cysteine 895, cysteine 912, and cysteine 915 each contribute to the Zn(2+) site.

This sequence belongs to the class-I aminoacyl-tRNA synthetase family. IleS type 1 subfamily. Monomer. Zn(2+) serves as cofactor.

It localises to the cytoplasm. The enzyme catalyses tRNA(Ile) + L-isoleucine + ATP = L-isoleucyl-tRNA(Ile) + AMP + diphosphate. Functionally, catalyzes the attachment of isoleucine to tRNA(Ile). As IleRS can inadvertently accommodate and process structurally similar amino acids such as valine, to avoid such errors it has two additional distinct tRNA(Ile)-dependent editing activities. One activity is designated as 'pretransfer' editing and involves the hydrolysis of activated Val-AMP. The other activity is designated 'posttransfer' editing and involves deacylation of mischarged Val-tRNA(Ile). The protein is Isoleucine--tRNA ligase of Neisseria meningitidis serogroup C (strain 053442).